Consider the following 103-residue polypeptide: uncharacterized protein (103 aa).

The protein localises to the mitochondrion. This is an uncharacterized protein from Claviceps purpurea (Ergot fungus).